The following is a 249-amino-acid chain: Ribonuclease PH (249 aa).

Phosphate contacts are provided by residues Arg-86 and 124 to 126 (GTR).

Belongs to the RNase PH family. In terms of assembly, homohexameric ring arranged as a trimer of dimers.

It carries out the reaction tRNA(n+1) + phosphate = tRNA(n) + a ribonucleoside 5'-diphosphate. Functionally, phosphorolytic 3'-5' exoribonuclease that plays an important role in tRNA 3'-end maturation. Removes nucleotide residues following the 3'-CCA terminus of tRNAs; can also add nucleotides to the ends of RNA molecules by using nucleoside diphosphates as substrates, but this may not be physiologically important. Probably plays a role in initiation of 16S rRNA degradation (leading to ribosome degradation) during starvation. The chain is Ribonuclease PH from Clostridium botulinum (strain Eklund 17B / Type B).